The chain runs to 609 residues: Leukotriene A-4 hydrolase (609 aa).

Residues glutamine 131–glutamine 133 and proline 263–glutamate 268 each bind a peptide. Position 292 (histidine 292) interacts with Zn(2+). The Proton acceptor role is filled by glutamate 293. The Zn(2+) site is built by histidine 296 and glutamate 315. The Proton donor role is filled by tyrosine 380. Arginine 560–lysine 562 serves as a coordination point for a peptide.

It belongs to the peptidase M1 family. As to quaternary structure, homodimer. Requires Zn(2+) as cofactor. Expressed in oocytes.

It localises to the cytoplasm. The catalysed reaction is Release of the N-terminal residue from a tripeptide.. The enzyme catalyses leukotriene A4 + H2O = leukotriene B4. It functions in the pathway lipid metabolism; leukotriene B4 biosynthesis. The epoxide hydrolase activity is mildly restrained by suicide inactivation, possibly involving binding of LTA4 to Tyr-380. Bifunctional zinc metalloenzyme that comprises both epoxide hydrolase (EH) and aminopeptidase activities. Acts as an epoxide hydrolase to catalyze the conversion of leukotriene A4 (LTA4) to the pro-inflammatory mediator leukotriene B4 (LTB4). During the conversion of LTA4 to LTB4, a second product is formed, the isomeric delta6-trans-delta8-cis-LTB4 (5S,12R-dihydroxy-6,10-trans-8,14-cis-eicosatetraenoic acid), with a relative formation of 10% delta6-trans-delta8-cis-LTB4 compared to 90% LTB4. The production of delta6-trans-delta8-cis-LTB4 seems to depend on the phenylalanine residue at position 375. Also has aminopeptidase activity. This Xenopus laevis (African clawed frog) protein is Leukotriene A-4 hydrolase.